A 138-amino-acid polypeptide reads, in one-letter code: Phospholipase A2 group V (138 aa).

The first 20 residues, 1-20 (MKGLLPLAWFLACSVPAVQG), serve as a signal peptide directing secretion. Intrachain disulfides connect cysteine 46-cysteine 137, cysteine 48-cysteine 64, cysteine 63-cysteine 117, cysteine 70-cysteine 110, cysteine 79-cysteine 103, and cysteine 97-cysteine 108. Ca(2+)-binding residues include tyrosine 47, glycine 49, and glycine 51. Histidine 67 is an active-site residue. Residue aspartate 68 participates in Ca(2+) binding. Aspartate 111 is a catalytic residue.

It belongs to the phospholipase A2 family. Ca(2+) serves as cofactor. Post-translationally, this enzyme lacks one of the seven disulfide bonds found in similar PLA2 proteins. Heart, placenta and less abundantly, in lung. Detected in the outer and inner plexiform layers of the retina (at protein level). Expressed in monocytes and macrophages.

It localises to the secreted. It is found in the cell membrane. Its subcellular location is the cytoplasmic vesicle. The protein localises to the phagosome. The protein resides in the recycling endosome. It localises to the golgi apparatus. It is found in the cis-Golgi network. Its subcellular location is the trans-Golgi network. It carries out the reaction a 1,2-diacyl-sn-glycero-3-phosphocholine + H2O = a 1-acyl-sn-glycero-3-phosphocholine + a fatty acid + H(+). The enzyme catalyses 1-hexadecanoyl-2-(9Z-octadecenoyl)-sn-glycero-3-phosphocholine + H2O = 1-hexadecanoyl-sn-glycero-3-phosphocholine + (9Z)-octadecenoate + H(+). The catalysed reaction is 1-hexadecanoyl-2-(5Z,8Z,11Z,14Z-eicosatetraenoyl)-sn-glycero-3-phosphocholine + H2O = 1-hexadecanoyl-sn-glycero-3-phosphocholine + (5Z,8Z,11Z,14Z)-eicosatetraenoate + H(+). It catalyses the reaction 1-hexadecanoyl-2-(9Z,12Z-octadecadienoyl)-sn-glycero-3-phosphoethanolamine + H2O = 1-hexadecanoyl-sn-glycero-3-phosphoethanolamine + (9Z,12Z)-octadecadienoate + H(+). It carries out the reaction 1-hexadecanoyl-2-(5Z,8Z,11Z,14Z-eicosatetraenoyl)-sn-glycero-3-phosphoethanolamine + H2O = 1-hexadecanoyl-sn-glycero-3-phosphoethanolamine + (5Z,8Z,11Z,14Z)-eicosatetraenoate + H(+). The enzyme catalyses 1-octadecanoyl-2-(5Z,8Z,11Z,14Z-eicosatetraenoyl)-sn-glycero-3-phospho-(1D-myo-inositol) + H2O = 1-octadecanoyl-sn-glycero-3-phospho-(1D-myo-inositol) + (5Z,8Z,11Z,14Z)-eicosatetraenoate + H(+). The catalysed reaction is 1-hexadecanoyl-2-(9Z-octadecenoyl)-sn-glycero-3-phosphoglycerol + H2O = 1-hexadecanoyl-sn-glycero-3-phosphoglycerol + (9Z)-octadecenoate + H(+). It catalyses the reaction N-hexadecanoyl-1,2-di-(9Z-octadecenoyl)-sn-glycero-3-phosphoethanolamine + H2O = N-hexadecanoyl-1-(9Z-octadecenoyl)-sn-glycero-3-phosphoethanolamine + (9Z)-octadecenoate + H(+). It carries out the reaction 1'-[1,2-di-(9Z-octadecenoyl)-sn-glycero-3-phospho]-3'-[1-(9Z-octadecenoyl)-sn-glycero-3-phospho]-glycerol + H2O = 1',3'-bis-[1-(9Z-octadecenoyl)-sn-glycero-3-phospho]-glycerol + (9Z)-octadecenoate + H(+). The enzyme catalyses 1',3'-bis[1,2-di-(9Z-octadecenoyl)-sn-glycero-3-phospho]-glycerol + H2O = 1'-[1,2-di-(9Z-octadecenoyl)-sn-glycero-3-phospho]-3'-[1-(9Z-octadecenoyl)-sn-glycero-3-phospho]-glycerol + (9Z)-octadecenoate + H(+). Its pathway is lipid metabolism; phospholipid metabolism. It functions in the pathway lipid metabolism; leukotriene B4 biosynthesis. The protein operates within lipid metabolism; leukotriene C4 biosynthesis. Its activity is regulated as follows. Activated by cardiolipin. Functionally, secretory calcium-dependent phospholipase A2 that primarily targets extracellular phospholipids. Hydrolyzes the ester bond of the fatty acyl group attached at sn-2 position of phospholipids (phospholipase A2 activity), preferentially releasing fatty acyl groups with a low degree of unsaturation such as oleoyl (C18:1) and linoleoyl (C18:2) groups. Hydrolyzes low-density lipoprotein (LDL) phospholipids releasing unsaturated fatty acids that drive macrophage polarization toward an M2 phenotype. May act in an autocrine and paracrine manner. Contributes to lipid remodeling of cellular membranes at different subcellular locations and generation of lipid mediators involved in pathogen clearance. Cleaves sn-2 fatty acyl chains of cardiolipin, a major component of the inner membrane of mitochondria and bacterial membranes. Promotes phagocytosis of bacteria in macrophages through production of lysophosphatidylethanolamines. Displays bactericidal activity against Gram-positive bacteria by directly hydrolyzing phospholipids of the bacterial membrane. Promotes phagocytosis and killing of ingested fungi likely through controlling phagosome-lysosome fusion and phagosome maturation. Plays a role in biosynthesis of cysteinyl leukotrienes (CysLTs) in myeloid cells. In eosinophils, triggers perinuclear arachidonate release and LTC4 synthesis in a PLA2G4A-independent way. In neutrophils, amplifies CysLTs biosynthesis initiated by PLA2G4A. Promotes immune complex clearance in macrophages via stimulating synthesis of CysLTs, which act through CYSLTR1 to trigger phagocytosis. May regulate antigen processing in antigen-presenting cells. In pulmonary macrophages regulates IL33 production required for activation of group 2 innate lymphoid cells. May play a role in the biosynthesis of N-acyl ethanolamines that regulate energy metabolism. Hydrolyzes N-acyl phosphatidylethanolamines to N-acyl lysophosphatidylethanolamines, which are further cleaved by a lysophospholipase D to release N-acyl ethanolamines. This is Phospholipase A2 group V (PLA2G5) from Homo sapiens (Human).